Here is a 139-residue protein sequence, read N- to C-terminus: Maximins 4/H3 type 4 (139 aa).

Positions 1-18 are cleaved as a signal peptide; it reads MNFKYIIAVSFLIASAYA. A propeptide spanning residues 19 to 43 is cleaved from the precursor; that stretch reads RSVQNDEQSLSQRDVLEEESLREIR. At Asn-70 the chain carries Asparagine amide. A propeptide spanning residues 74 to 118 is cleaved from the precursor; that stretch reads TAEEHEVMKRLEAVMRDLDSLDHPEEASERETRGFNQDEIAKEKR. Isoleucine amide is present on Ile-138.

Belongs to the bombinin family. As to expression, expressed by the skin glands.

The protein localises to the secreted. In terms of biological role, maximin-4 shows antibacterial activity against both Gram-positive and Gram-negative bacteria. It also shows antimicrobial activity against the fungus C.albicans, but not against A.flavus nor P.uticale. It has little hemolytic activity. It does not possess a significant cytotoxicity against tumor cell lines. It does not possess a significant anti-HIV activity. Functionally, maximin-H3 shows antibacterial activity against both Gram-positive and Gram-negative bacteria. It also shows antimicrobial activity against the fungus C.albicans. Shows strong hemolytic activity. This chain is Maximins 4/H3 type 4, found in Bombina maxima (Giant fire-bellied toad).